We begin with the raw amino-acid sequence, 1691 residues long: Non-structural polyprotein pORF1 (1691 aa).

Residues 56–240 form the Alphavirus-like MT domain; sequence VFRPEVFWNH…HDVATLRTWI (185 aa). The segment at 60–240 is methyltransferase; the sequence is EVFWNHPIQR…HDVATLRTWI (181 aa). The Y-domain stretch occupies residues 241-439; that stretch reads RTTKVVGEHP…FYAQCRRWLS (199 aa). A disulfide bond links C434 and C481. A putative protease region spans residues 442 to 509; the sequence is FHLDPRTLVF…EAYEGSDVDT (68 aa). Residues 510–691 are zinc-binding; that stretch reads AEPATLDITG…FSPGHEWRSA (182 aa). Positions 671, 673, and 686 each coordinate Zn(2+). Positions 710–776 are hinge; sequence DTPLTVGLIS…GPNPNGVPQR (67 aa). A disordered region spans residues 722 to 778; that stretch reads LDAAPHSGGPPATATGPAVGSSDSPDPDPLPDVTDGSRPSGARPAGPNPNGVPQRRL. Residues 773 to 919 form the Macro domain; that stretch reads VPQRRLLHTY…LYLTELAARW (147 aa). The X-domain stretch occupies residues 783 to 940; it reads PDGAKIYVGS…NITEDTARAA (158 aa). The (+)RNA virus helicase ATP-binding domain occupies 932 to 1080; sequence ITEDTARAAN…RPELVPTSWW (149 aa). Residues 958–1202 are NTPase/helicase; that stretch reads GCKVEPGVVR…ISDAIVNNFF (245 aa). 973-980 contacts ATP; sequence GVPGSGKS. Positions 1081 to 1214 constitute a (+)RNA virus helicase C-terminal domain; that stretch reads HVTHRCPADV…GGEVGHQRPS (134 aa). The segment at 1205-1691 is RNA-directed RNA polymerase; it reads GGEVGHQRPS…LTHSIMHRSE (487 aa). Residues 1452-1563 form the RdRp catalytic domain; the sequence is AMVFENDFSE…LCSEYRQSPG (112 aa).

It belongs to the hepevirus non-structural polyprotein family. As to quaternary structure, the protease domain interacts with host EIF2AK4 (via C-terminus); this interaction inhibits dimerization of EIF2AK4 and prevents EIF2AK4-mediated phosphorylation of host EIF2A. Mg(2+) is required as a cofactor. Post-translationally, ORF1 polyprotein does not seem to be processed into distinct enzymatic domains by a viral protease belonging to ORF1, but could be processed by a host serine protease like thrombin.

Its subcellular location is the host cytoplasm. The protein resides in the host perinuclear region. The enzyme catalyses RNA(n) + a ribonucleoside 5'-triphosphate = RNA(n+1) + diphosphate. It carries out the reaction GTP + S-adenosyl-L-methionine = N(7)-methyl-GTP + S-adenosyl-L-homocysteine. With respect to regulation, putative protease: Inhibited by chymostatin. Methyltransferase: Displays a capping enzyme activity. This function is necessary since all viral RNAs are synthesized in the cytoplasm, and host capping enzymes are restricted to the nucleus. The enzymatic reaction involves a covalent link between 7-methyl-GMP and the methyltransferase, whereas eukaryotic capping enzymes form a covalent complex only with GMP. Methyltransferase catalyzes transfer of a methyl group from S-adenosylmethionine to GTP and GDP to yield m(7)GTP or m(7)GDP. GDP is a better substrate than GTP. This enzyme also displays guanylyltransferase activity to form a covalent complex, methyltransferase-m(7)GMP, from which 7-methyl-GMP is transferred to the mRNA to create the cap structure. Its function is as follows. Y-domain: Indispensable for virus replication. In terms of biological role, putative protease: The putative protease domain although necessary for replication of the virus may not be a protease but rather a structural Zn(2+)-binding domain. Inhibits induction of IFN-beta by MDA5 and RIG-I pathways and down-regulates the expression of MDA5. Functionally, NTPase/helicase: Multi-functional protein that exhibits NTPase and RNA unwinding activities. Hydrolyzes all NTPs efficiently and unwinds RNA duplexes containing 5' overhangs. Possesses a sequence independent RNA-5'-triphosphatase (RTPase) activity suggestive of its role in forming viral cap structure. Also participates in viral genome replication, RNA translocation and genome packaging/unpackaging. RNA-directed RNA polymerase: Plays an essential role in the virus replication. Binds to the 3'-end of the genomic RNA to initiate viral replication. This Bandicota bengalensis (lesser bandicoot rat) protein is Non-structural polyprotein pORF1.